The chain runs to 469 residues: MWKEKVQQYEDQIINDLKGLLAIESVRDDAKASEDAPVGPGPRKALDYMYEIAHRDGFTTHDVDHIAGRIEAGKGNDVLGILCHVDVVPAGDGWDSNPFEPVVTEDAIIARGTLDDKGPTIAAYYAIKILEDMNVDWKKRIHMIIGTDEESDWKCTDRYFKTEEMPTLGFAPDAEFPCIHGEKGITTFDLVQNKLAEDQDEPDYELITFKSGERYNMVPDHAEARVLVKENMTDVIQDFEYFLEQNHLQGDSTVDSGILVLTVEGKAVHGMDPSIGVNAGLYLLKFLASLNLDNNAKAFVAFSNRYLFNSDFGEKMGMKFHTDVMGDVTTNIGVITYDNENAGLFGINLRYPEGFEFEKAMDRFANEIQQYGFEVKLGKVQPPHYVDKNDPFVQKLVTAYRNQTNDMTEPYTIGGGTYARNLDKGVAFGAMFSDSEDLMHQKNEYITKKQLFNATSIYLEAIYSLCVEE.

His-84 contributes to the Zn(2+) binding site. Residue Asp-86 is part of the active site. Asp-115 contacts Zn(2+). Residue Glu-149 is the Proton acceptor of the active site. The Zn(2+) site is built by Glu-150, Asp-173, and His-440.

The protein belongs to the peptidase M20A family. Requires Zn(2+) as cofactor.

The sequence is that of Putative dipeptidase SAR1836 from Staphylococcus aureus (strain MRSA252).